The chain runs to 476 residues: Protein transport protein Sec61 subunit alpha isoform 2 (476 aa).

The Cytoplasmic portion of the chain corresponds to 1 to 33 (MGIKFLEVIKPFCAVLPEIQKPERKIQFREKVL). The chain crosses the membrane as a helical span at residues 34-53 (WTAITLFIFLVCCQIPLFGI). Residues 54-76 (MSSDSADPFYWMRVILASNRGTL) lie on the Lumenal side of the membrane. Residues 77–96 (MELGISPIVTSGLIMQLLAG) traverse the membrane as a helical segment. Residues 97-117 (AKIIEVGDTPKDRALFNGAQK) lie on the Cytoplasmic side of the membrane. Residues 118–138 (LFGMIITIGQAIVYVMTGMYG) traverse the membrane as a helical segment. Residues 139 to 144 (DPAEMG) are Lumenal-facing. Residues 145-165 (AGICLLIIIQLFVAGLIVLLL) traverse the membrane as a helical segment. Residues 166 to 172 (DELLQKG) lie on the Cytoplasmic side of the membrane. Residues 173-193 (YGLGSGISLFIATNICETIVW) form a helical membrane-spanning segment. At 194–240 (KAFSPTTINTGRGTEFEGAVIALFHLLATRTDKVRALREAFYRQNLP) the chain is on the lumenal side. Residues 241–261 (NLMNLIATVFVFAVVIYFQGF) traverse the membrane as a helical segment. The Cytoplasmic segment spans residues 262 to 288 (RVDLPIKSARYRGQYSSYPIKLFYTSN). Residues 289–309 (IPIILQSALVSNLYVISQMLS) form a helical membrane-spanning segment. At 310 to 354 (VRFSGNFLVNLLGQWADVSGGGPARSYPVGGLCYYLSPPESMGAI) the chain is on the lumenal side. Residues 355–375 (FEDPVHVVVYIIFMLGSCAFF) traverse the membrane as a helical segment. At 376–420 (SKTWIEVSGSSAKDVAKQLKEQQMVMRGHRDTSMVHELNRYIPTA) the chain is on the cytoplasmic side. The helical transmembrane segment at 421 to 441 (AAFGGLCIGALSVLADFLGAI) threads the bilayer. The Lumenal segment spans residues 442–445 (GSGT). Residues 446 to 462 (GILLAVTIIYQYFEIFV) traverse the membrane as a helical segment. The Cytoplasmic segment spans residues 463–476 (KEQAEVGGMGALFF).

It belongs to the SecY/SEC61-alpha family. In terms of assembly, the SEC61 channel-forming translocon complex consists of channel-forming core components SEC61A1, SEC61B and SEC61G and different auxiliary components such as SEC62 and SEC63.

It localises to the endoplasmic reticulum membrane. Its function is as follows. Component of SEC61 channel-forming translocon complex that mediates transport of signal peptide-containing precursor polypeptides across the endoplasmic reticulum (ER). Forms a ribosome receptor and a gated pore in the ER membrane, both functions required for cotranslational translocation of nascent polypeptides. This chain is Protein transport protein Sec61 subunit alpha isoform 2 (SEC61A2), found in Homo sapiens (Human).